A 222-amino-acid chain; its full sequence is ER membrane protein complex subunit 7 homolog (222 aa).

Positions 1–16 (MKSILLLFSLIVLGSA) are cleaved as a signal peptide. Residues 17–145 (TEEVSRTEQT…RKREEWRITD (129 aa)) lie on the Extracellular side of the membrane. Residues 146 to 166 (MLFSPMVLMLVVPLVVMLILP) traverse the membrane as a helical segment. Residues 167–222 (KMTANDPELKKEMENMQMPKVDMPDVGEMMANFFGGSAPAKKKAVTGGSGSGQRRK) lie on the Cytoplasmic side of the membrane.

The protein belongs to the EMC7 family.

The protein resides in the membrane. The sequence is that of ER membrane protein complex subunit 7 homolog from Caenorhabditis elegans.